The primary structure comprises 320 residues: 4-diphosphocytidyl-2-C-methyl-D-erythritol kinase (320 aa).

Lys-20 is an active-site residue. ATP is bound at residue 112-122 (PVAGGMGGGSA). Residue Asp-154 is part of the active site.

It belongs to the GHMP kinase family. IspE subfamily.

The enzyme catalyses 4-CDP-2-C-methyl-D-erythritol + ATP = 4-CDP-2-C-methyl-D-erythritol 2-phosphate + ADP + H(+). The protein operates within isoprenoid biosynthesis; isopentenyl diphosphate biosynthesis via DXP pathway; isopentenyl diphosphate from 1-deoxy-D-xylulose 5-phosphate: step 3/6. Its function is as follows. Catalyzes the phosphorylation of the position 2 hydroxy group of 4-diphosphocytidyl-2C-methyl-D-erythritol. This chain is 4-diphosphocytidyl-2-C-methyl-D-erythritol kinase, found in Arthrobacter sp. (strain FB24).